The following is a 78-amino-acid chain: uncharacterized protein (78 aa).

Residues glutamate 56 to glutamate 66 are compositionally biased toward basic and acidic residues. A disordered region spans residues glutamate 56–aspartate 78.

This is an uncharacterized protein from Saccharomyces cerevisiae (strain ATCC 204508 / S288c) (Baker's yeast).